Consider the following 350-residue polypeptide: Peptide-N(4)-(N-acetyl-beta-glucosaminyl)asparagine amidase (350 aa).

4 residues coordinate Zn(2+): C123, C126, C157, and C160. Catalysis depends on C183, which acts as the Nucleophile. Active-site residues include H210 and D227. E230 contributes to the substrate binding site. The disordered stretch occupies residues 324–350 (EIPPAAGAAGRQSGSADWKRQRGEDGR). Residues 340-350 (DWKRQRGEDGR) show a composition bias toward basic and acidic residues.

The protein belongs to the transglutaminase-like superfamily. PNGase family. It depends on Zn(2+) as a cofactor.

The protein resides in the cytoplasm. It carries out the reaction Hydrolysis of an N(4)-(acetyl-beta-D-glucosaminyl)asparagine residue in which the glucosamine residue may be further glycosylated, to yield a (substituted) N-acetyl-beta-D-glucosaminylamine and a peptide containing an aspartate residue.. Its function is as follows. Specifically deglycosylates the denatured form of N-linked glycoproteins in the cytoplasm and assists their proteasome-mediated degradation. Cleaves the beta-aspartyl-glucosamine (GlcNAc) of the glycan and the amide side chain of Asn, converting Asn to Asp. Prefers proteins containing high-mannose over those bearing complex type oligosaccharides. Can recognize misfolded proteins in the endoplasmic reticulum that are exported to the cytosol to be destroyed and deglycosylate them, while it has no activity toward native proteins. Deglycosylation is a prerequisite for subsequent proteasome-mediated degradation of some, but not all, misfolded glycoproteins. The protein is Peptide-N(4)-(N-acetyl-beta-glucosaminyl)asparagine amidase (PNG1) of Eremothecium gossypii (strain ATCC 10895 / CBS 109.51 / FGSC 9923 / NRRL Y-1056) (Yeast).